The sequence spans 938 residues: Protein translocase subunit SecA 1 (938 aa).

ATP is bound by residues Gln84, 102–106 (GEGKT), and Asp491. Positions 865–938 (QTGGVATKER…QKTGRHAKRR (74 aa)) are disordered. Residues 918-927 (TRKERREAAR) are compositionally biased toward basic and acidic residues.

The protein belongs to the SecA family. Monomer and homodimer. Part of the essential Sec protein translocation apparatus which comprises SecA, SecYEG and auxiliary proteins SecDF. Other proteins may also be involved.

It localises to the cell membrane. It is found in the cytoplasm. It carries out the reaction ATP + H2O + cellular proteinSide 1 = ADP + phosphate + cellular proteinSide 2.. Functionally, part of the Sec protein translocase complex. Interacts with the SecYEG preprotein conducting channel. Has a central role in coupling the hydrolysis of ATP to the transfer of proteins into and across the cell membrane, serving as an ATP-driven molecular motor driving the stepwise translocation of polypeptide chains across the membrane. This is Protein translocase subunit SecA 1 from Mycolicibacterium vanbaalenii (strain DSM 7251 / JCM 13017 / BCRC 16820 / KCTC 9966 / NRRL B-24157 / PYR-1) (Mycobacterium vanbaalenii).